We begin with the raw amino-acid sequence, 255 residues long: Thiazole synthase (255 aa).

Catalysis depends on Lys-95, which acts as the Schiff-base intermediate with DXP. 1-deoxy-D-xylulose 5-phosphate-binding positions include Gly-156, 182–183 (AG), and 204–205 (NT).

The protein belongs to the ThiG family. As to quaternary structure, homotetramer. Forms heterodimers with either ThiH or ThiS.

Its subcellular location is the cytoplasm. It carries out the reaction [ThiS sulfur-carrier protein]-C-terminal-Gly-aminoethanethioate + 2-iminoacetate + 1-deoxy-D-xylulose 5-phosphate = [ThiS sulfur-carrier protein]-C-terminal Gly-Gly + 2-[(2R,5Z)-2-carboxy-4-methylthiazol-5(2H)-ylidene]ethyl phosphate + 2 H2O + H(+). Its pathway is cofactor biosynthesis; thiamine diphosphate biosynthesis. Functionally, catalyzes the rearrangement of 1-deoxy-D-xylulose 5-phosphate (DXP) to produce the thiazole phosphate moiety of thiamine. Sulfur is provided by the thiocarboxylate moiety of the carrier protein ThiS. In vitro, sulfur can be provided by H(2)S. The protein is Thiazole synthase of Aeromonas salmonicida (strain A449).